Consider the following 218-residue polypeptide: Dynein axonemal assembly factor 6 (218 aa).

The segment at 66 to 103 is disordered; that stretch reads MGPGNIGPPKAKESKAIPEPRSDESENIWNPEEVPEGA. Residues 75-89 show a composition bias toward basic and acidic residues; it reads KAKESKAIPEPRSDE.

Belongs to the PIH1 family. In terms of assembly, interacts with HSPA1A/B, HSP90AA1 and DNAI2. Interacts with DNAAF2 and DNAAF4. As to expression, specifically expressed in testis. Detected in pachytene spermatocytes from 5 weeks of age and in pachytene and diplotene spermatocytes of adult mice. Not detected in spermatids or mature sperm.

It is found in the cytoplasm. The protein resides in the golgi apparatus. It localises to the trans-Golgi network. In terms of biological role, plays a role in cytoplasmic pre-assembly of axonemal dynein. The protein is Dynein axonemal assembly factor 6 of Mus musculus (Mouse).